We begin with the raw amino-acid sequence, 319 residues long: Extracellular phospholipase A1 (319 aa).

The first 24 residues, 1–24, serve as a signal peptide directing secretion; that stretch reads MSMPLSFTSAVSPVAAIPTPRAAA.

It catalyses the reaction a 1,2-diacyl-sn-glycero-3-phosphocholine + H2O = a 2-acyl-sn-glycero-3-phosphocholine + a fatty acid + H(+). This Serratia liquefaciens protein is Extracellular phospholipase A1 (phlA).